Consider the following 660-residue polypeptide: Macrolide export ATP-binding/permease protein MacB (660 aa).

The ABC transporter domain maps to 10-248; sequence LVLENIVRKF…TDSQALYGKQ (239 aa). Residue 46–53 participates in ATP binding; sequence GASGSGKS. The next 4 helical transmembrane spans lie at 285–305, 532–552, 593–613, and 625–645; these read FLTMLGVIIGIGAIIAMVALG, ILTLLVSSIAAISLIVGGIGV, VIGGGLGILFGMSIGGLFLLF, and SIILSLTFSTLIGVCFGFSPA.

This sequence belongs to the ABC transporter superfamily. Macrolide exporter (TC 3.A.1.122) family. As to quaternary structure, homodimer.

The protein resides in the cell inner membrane. Functionally, non-canonical ABC transporter that contains transmembrane domains (TMD), which form a pore in the inner membrane, and an ATP-binding domain (NBD), which is responsible for energy generation. Confers resistance against macrolides. The protein is Macrolide export ATP-binding/permease protein MacB of Bartonella henselae (strain ATCC 49882 / DSM 28221 / CCUG 30454 / Houston 1) (Rochalimaea henselae).